The chain runs to 72 residues: Translation initiation factor IF-1 (72 aa).

The 72-residue stretch at 1–72 (MAKDDVIEVD…DKGRITYRHK (72 aa)) folds into the S1-like domain.

Belongs to the IF-1 family. In terms of assembly, component of the 30S ribosomal translation pre-initiation complex which assembles on the 30S ribosome in the order IF-2 and IF-3, IF-1 and N-formylmethionyl-tRNA(fMet); mRNA recruitment can occur at any time during PIC assembly.

Its subcellular location is the cytoplasm. Its function is as follows. One of the essential components for the initiation of protein synthesis. Stabilizes the binding of IF-2 and IF-3 on the 30S subunit to which N-formylmethionyl-tRNA(fMet) subsequently binds. Helps modulate mRNA selection, yielding the 30S pre-initiation complex (PIC). Upon addition of the 50S ribosomal subunit IF-1, IF-2 and IF-3 are released leaving the mature 70S translation initiation complex. The chain is Translation initiation factor IF-1 from Helicobacter hepaticus (strain ATCC 51449 / 3B1).